The chain runs to 259 residues: MKPFFWRIIGSGSVNLVFIHGWGLNSCIWNNIIIILSNYFKLHLVDLPGYGKNILYKEYSFSKITEIIACKSPKKSILIGWSLGGLIATNISIVYPEKFKGLIIVSSSPCFCEKKDWPGIKKEILNNFSFQLKNDFHNTVKKFFNIQFLGTKKNNNEIKKLKNIFFRQKEPSYKTLSSGLKILKNIDIRNYLKYIKIPTLRIYGNLDVIVPVKIIPIIKKLQNFNINKNIIIPSASHAPFLSHPFLFCKIIKYFIKKFN.

Residues 16 to 244 enclose the AB hydrolase-1 domain; that stretch reads LVFIHGWGLN…ASHAPFLSHP (229 aa). Substrate is bound by residues tryptophan 22, 82-83, and 143-147; these read SL and FFNIQ. Serine 82 functions as the Nucleophile in the catalytic mechanism. Active-site residues include aspartate 207 and histidine 237. Residue histidine 237 coordinates substrate.

The protein belongs to the AB hydrolase superfamily. Carboxylesterase BioH family. In terms of assembly, monomer.

Its subcellular location is the cytoplasm. The catalysed reaction is 6-carboxyhexanoyl-[ACP] methyl ester + H2O = 6-carboxyhexanoyl-[ACP] + methanol + H(+). It participates in cofactor biosynthesis; biotin biosynthesis. Functionally, the physiological role of BioH is to remove the methyl group introduced by BioC when the pimeloyl moiety is complete. It allows to synthesize pimeloyl-ACP via the fatty acid synthetic pathway through the hydrolysis of the ester bonds of pimeloyl-ACP esters. This Wigglesworthia glossinidia brevipalpis protein is Pimeloyl-[acyl-carrier protein] methyl ester esterase.